Here is a 72-residue protein sequence, read N- to C-terminus: Small, acid-soluble spore protein C (72 aa).

It belongs to the alpha/beta-type SASP family.

In terms of biological role, SASP are bound to spore DNA. They are double-stranded DNA-binding proteins that cause DNA to change to an a-like conformation. They protect the DNA backbone from chemical and enzymatic cleavage and are thus involved in dormant spore's high resistance to UV light. This Bacillus subtilis (strain 168) protein is Small, acid-soluble spore protein C (sspC).